The following is a 517-amino-acid chain: 3-hydroxyphenylacetate 6-hydroxylase (517 aa).

Cysteine 449 serves as a coordination point for heme.

The protein belongs to the cytochrome P450 family.

It carries out the reaction 3-hydroxyphenylacetate + NADH + O2 + H(+) = homogentisate + NAD(+) + H2O. The enzyme catalyses 3-hydroxyphenylacetate + NADPH + O2 + H(+) = homogentisate + NADP(+) + H2O. The catalysed reaction is 3,4-dihydroxyphenylacetate + NADH + O2 + H(+) = 2,4,5-trihydroxyphenylacetate + NAD(+) + H2O. It catalyses the reaction 3,4-dihydroxyphenylacetate + NADPH + O2 + H(+) = 2,4,5-trihydroxyphenylacetate + NADP(+) + H2O. It functions in the pathway aromatic compound metabolism; phenylacetate degradation. Its function is as follows. Catalyzes the hydroxylation of 3-hydroxyphenylacetate and 3,4-dihydroxyphenylacetate to 2,5-dihydroxyphenylacetate (homogentisate) and 2,4,5-trihydroxyphenylacetate, respectively. Both of these compounds are used as substrate by homogentisate dioxygenase in the homogentisate pathway. The homogentisate pathway is used to catabolize phenylacetate and use it as a carbon source. Can also catalyze the hydroxylation of phenylacetate to 2-hydroxyphenylacetate at low efficiency to compensate for loss of phacA. The chain is 3-hydroxyphenylacetate 6-hydroxylase (phacB) from Emericella nidulans (Aspergillus nidulans).